The following is a 261-amino-acid chain: Uridine-cytidine kinase 2 (261 aa).

Residues 1-24 (MAGDSEQALPKHSPQNGQPFLIGV) form a disordered region. 26–34 (GGTASGKSS) contributes to the ATP binding site. Substrate is bound by residues D83, Y111, H116, R165, R175, and Q183. Residue D212 coordinates ATP. A compositionally biased stretch (polar residues) spans 238–247 (NGYTNGFTSP). The tract at residues 238-261 (NGYTNGFTSPRTRHPSDSNSSRPH) is disordered.

The protein belongs to the uridine kinase family. As to quaternary structure, homotetramer.

It carries out the reaction uridine + ATP = UMP + ADP + H(+). The enzyme catalyses cytidine + ATP = CMP + ADP + H(+). Its pathway is pyrimidine metabolism; CTP biosynthesis via salvage pathway; CTP from cytidine: step 1/3. The protein operates within pyrimidine metabolism; UMP biosynthesis via salvage pathway; UMP from uridine: step 1/1. Its function is as follows. Phosphorylates uridine and cytidine to uridine monophosphate and cytidine monophosphate. Does not phosphorylate deoxyribonucleosides or purine ribonucleosides. Can use ATP or GTP as a phosphate donor. This chain is Uridine-cytidine kinase 2 (uck2), found in Xenopus tropicalis (Western clawed frog).